Reading from the N-terminus, the 358-residue chain is SPbeta prophage-derived probable integrase/recombinase YopP (358 aa).

Positions 23 to 114 (NKDIRSSSGN…SLKMLYTYLE (92 aa)) constitute a Core-binding (CB) domain. Residues 137–319 (KNWDKTTQTE…NIANSAGVTM (183 aa)) form the Tyr recombinase domain. Residues Arg-178, Lys-206, His-268, and His-295 contribute to the active site. Tyr-304 acts as the O-(3'-phospho-DNA)-tyrosine intermediate in catalysis.

It belongs to the 'phage' integrase family.

Functionally, probable recombinase that does not seem to have a role in chromosome dimer resolution per se but rather may have some facilitative role during chromosome partitioning in general. The chain is SPbeta prophage-derived probable integrase/recombinase YopP (yopP) from Bacillus subtilis (strain 168).